Reading from the N-terminus, the 100-residue chain is Large ribosomal subunit protein uL23 (100 aa).

It belongs to the universal ribosomal protein uL23 family. As to quaternary structure, part of the 50S ribosomal subunit. Contacts protein L29, and trigger factor when it is bound to the ribosome.

One of the early assembly proteins it binds 23S rRNA. One of the proteins that surrounds the polypeptide exit tunnel on the outside of the ribosome. Forms the main docking site for trigger factor binding to the ribosome. The chain is Large ribosomal subunit protein uL23 from Yersinia enterocolitica serotype O:8 / biotype 1B (strain NCTC 13174 / 8081).